The following is a 226-amino-acid chain: Urease accessory protein UreF (226 aa).

The protein belongs to the UreF family. As to quaternary structure, ureD, UreF and UreG form a complex that acts as a GTP-hydrolysis-dependent molecular chaperone, activating the urease apoprotein by helping to assemble the nickel containing metallocenter of UreC. The UreE protein probably delivers the nickel.

The protein resides in the cytoplasm. Required for maturation of urease via the functional incorporation of the urease nickel metallocenter. The chain is Urease accessory protein UreF from Paraburkholderia phymatum (strain DSM 17167 / CIP 108236 / LMG 21445 / STM815) (Burkholderia phymatum).